We begin with the raw amino-acid sequence, 274 residues long: S-methyl-5'-thioadenosine phosphorylase (274 aa).

Residues serine 20, arginine 62–histidine 63, and serine 95–alanine 96 contribute to the phosphate site. Methionine 194 contacts substrate. Threonine 195 lines the phosphate pocket. Aspartate 218 to aspartate 220 is a substrate binding site.

Belongs to the PNP/MTAP phosphorylase family. MTAP subfamily. Homohexamer. Dimer of a homotrimer.

It carries out the reaction S-methyl-5'-thioadenosine + phosphate = 5-(methylsulfanyl)-alpha-D-ribose 1-phosphate + adenine. It participates in amino-acid biosynthesis; L-methionine biosynthesis via salvage pathway; S-methyl-5-thio-alpha-D-ribose 1-phosphate from S-methyl-5'-thioadenosine (phosphorylase route): step 1/1. In terms of biological role, catalyzes the reversible phosphorylation of S-methyl-5'-thioadenosine (MTA) to adenine and 5-methylthioribose-1-phosphate. Involved in the breakdown of MTA, a major by-product of polyamine biosynthesis. Responsible for the first step in the methionine salvage pathway after MTA has been generated from S-adenosylmethionine. Has broad substrate specificity with 6-aminopurine nucleosides as preferred substrates. The polypeptide is S-methyl-5'-thioadenosine phosphorylase (Hyperthermus butylicus (strain DSM 5456 / JCM 9403 / PLM1-5)).